Here is a 139-residue protein sequence, read N- to C-terminus: Actin-depolymerizing factor 1 (139 aa).

The ADF-H domain maps to 5–139 (ASGMAVHDDC…DLDVFRSRAN (135 aa)). At S6 the chain carries Phosphoserine; by CPK3.

This sequence belongs to the actin-binding proteins ADF family. In terms of assembly, interacts with the 14-3-3-like protein GRF6/AFT1. Post-translationally, phosphorylation at Ser-6 by CPK3/CDPK6 inhibits actin-depolimerizing activity. In terms of tissue distribution, expressed in vascular tissues of all organs.

It localises to the cytoplasm. It is found in the cytoskeleton. Its function is as follows. Actin-depolymerizing protein. Stimulates F-actin depolymerization. Involved in plant development, cell organ expansion and flowering by controlling breakdown of thick actin cables. Severs actin filaments or bundles and promotes actin cytoskeleton disassembly. Binds monomeric actin (G-actin) with a marked preference for the ADP-loaded form and inhibits the rate of nucleotide exchange on G-actin. In Arabidopsis thaliana (Mouse-ear cress), this protein is Actin-depolymerizing factor 1 (ADF1).